We begin with the raw amino-acid sequence, 277 residues long: Release factor glutamine methyltransferase (277 aa).

S-adenosyl-L-methionine is bound by residues 117–121 (GTGTG), aspartate 140, tryptophan 168, and asparagine 183. 183 to 186 (NPPY) is a substrate binding site.

The protein belongs to the protein N5-glutamine methyltransferase family. PrmC subfamily.

It carries out the reaction L-glutaminyl-[peptide chain release factor] + S-adenosyl-L-methionine = N(5)-methyl-L-glutaminyl-[peptide chain release factor] + S-adenosyl-L-homocysteine + H(+). In terms of biological role, methylates the class 1 translation termination release factors RF1/PrfA and RF2/PrfB on the glutamine residue of the universally conserved GGQ motif. The sequence is that of Release factor glutamine methyltransferase from Shigella dysenteriae serotype 1 (strain Sd197).